We begin with the raw amino-acid sequence, 211 residues long: Beta-crystallin B3 (211 aa).

The disordered stretch occupies residues 1–21 (MTEQQSPPEQMVTGEGAGERG). Residues 1 to 23 (MTEQQSPPEQMVTGEGAGERGGN) form an N-terminal arm region. Beta/gamma crystallin 'Greek key' domains are found at residues 24–63 (YKIT…QVES) and 64–108 (GPWL…RPLQ). The interval 109–113 (IDSPD) is connecting peptide. 2 Beta/gamma crystallin 'Greek key' domains span residues 114–155 (HKIH…RALN) and 156–198 (GTWV…RRVR). Residues 200 to 211 (QQWHQRGSFENS) are C-terminal arm.

This sequence belongs to the beta/gamma-crystallin family. As to quaternary structure, homo/heterodimer, or complexes of higher-order. The structure of beta-crystallin oligomers seems to be stabilized through interactions between the N-terminal arms.

In terms of biological role, crystallins are the dominant structural components of the vertebrate eye lens. This is Beta-crystallin B3 (CRYBB3) from Gallus gallus (Chicken).